We begin with the raw amino-acid sequence, 186 residues long: Large ribosomal subunit protein uL5 (186 aa).

It belongs to the universal ribosomal protein uL5 family. Part of the 50S ribosomal subunit; contacts the 5S rRNA and probably tRNA. Forms a bridge to the 30S subunit in the 70S ribosome.

In terms of biological role, this is one of the proteins that bind and probably mediate the attachment of the 5S RNA into the large ribosomal subunit, where it forms part of the central protuberance. In the 70S ribosome it contacts protein S13 of the 30S subunit (bridge B1b), connecting the 2 subunits; this bridge is implicated in subunit movement. May contact the P site tRNA; the 5S rRNA and some of its associated proteins might help stabilize positioning of ribosome-bound tRNAs. This chain is Large ribosomal subunit protein uL5, found in Pyrococcus furiosus (strain ATCC 43587 / DSM 3638 / JCM 8422 / Vc1).